The primary structure comprises 89 residues: Small ribosomal subunit protein uS15 (89 aa).

The protein belongs to the universal ribosomal protein uS15 family. As to quaternary structure, part of the 30S ribosomal subunit. Forms a bridge to the 50S subunit in the 70S ribosome, contacting the 23S rRNA.

In terms of biological role, one of the primary rRNA binding proteins, it binds directly to 16S rRNA where it helps nucleate assembly of the platform of the 30S subunit by binding and bridging several RNA helices of the 16S rRNA. Functionally, forms an intersubunit bridge (bridge B4) with the 23S rRNA of the 50S subunit in the ribosome. In Rhizobium johnstonii (strain DSM 114642 / LMG 32736 / 3841) (Rhizobium leguminosarum bv. viciae), this protein is Small ribosomal subunit protein uS15.